A 1058-amino-acid polypeptide reads, in one-letter code: Carbamoyl phosphate synthase large chain (1058 aa).

Residues 1-401 (MPKRTDIQKI…SLLKACRSLE (401 aa)) form a carboxyphosphate synthetic domain region. 12 residues coordinate ATP: Arg129, Arg169, Gly175, Gly176, Arg208, Ile210, Glu215, Gly241, Ile242, His243, Gln284, and Glu298. Residues 133-327 (KQLMEELEQP…IAKLAAKIAV (195 aa)) enclose the ATP-grasp 1 domain. Positions 284, 298, and 300 each coordinate Mg(2+). Mn(2+) is bound by residues Gln284, Glu298, and Asn300. The tract at residues 402 to 546 (IGVHHNEIPE…YSTYGWENES (145 aa)) is oligomerization domain. Residues 547 to 929 (IRSDKESVLV…ALYKAFEASY (383 aa)) are carbamoyl phosphate synthetic domain. In terms of domain architecture, ATP-grasp 2 spans 671–861 (EQALKELDIP…MAQVATKLIL (191 aa)). Residues Arg707, Ser746, Ile748, Glu752, Gly777, Val778, His779, Ser780, Gln820, and Glu832 each coordinate ATP. Mg(2+)-binding residues include Gln820, Glu832, and Asn834. Mn(2+)-binding residues include Gln820, Glu832, and Asn834. The MGS-like domain occupies 930-1058 (LHLPTFGNVV…ESRSFVTEAI (129 aa)). The allosteric domain stretch occupies residues 930-1058 (LHLPTFGNVV…ESRSFVTEAI (129 aa)).

This sequence belongs to the CarB family. Composed of two chains; the small (or glutamine) chain promotes the hydrolysis of glutamine to ammonia, which is used by the large (or ammonia) chain to synthesize carbamoyl phosphate. Tetramer of heterodimers (alpha,beta)4. Requires Mg(2+) as cofactor. It depends on Mn(2+) as a cofactor.

It catalyses the reaction hydrogencarbonate + L-glutamine + 2 ATP + H2O = carbamoyl phosphate + L-glutamate + 2 ADP + phosphate + 2 H(+). The enzyme catalyses hydrogencarbonate + NH4(+) + 2 ATP = carbamoyl phosphate + 2 ADP + phosphate + 2 H(+). The protein operates within amino-acid biosynthesis; L-arginine biosynthesis; carbamoyl phosphate from bicarbonate: step 1/1. Its pathway is pyrimidine metabolism; UMP biosynthesis via de novo pathway; (S)-dihydroorotate from bicarbonate: step 1/3. Functionally, large subunit of the glutamine-dependent carbamoyl phosphate synthetase (CPSase). CPSase catalyzes the formation of carbamoyl phosphate from the ammonia moiety of glutamine, carbonate, and phosphate donated by ATP, constituting the first step of 2 biosynthetic pathways, one leading to arginine and/or urea and the other to pyrimidine nucleotides. The large subunit (synthetase) binds the substrates ammonia (free or transferred from glutamine from the small subunit), hydrogencarbonate and ATP and carries out an ATP-coupled ligase reaction, activating hydrogencarbonate by forming carboxy phosphate which reacts with ammonia to form carbamoyl phosphate. This chain is Carbamoyl phosphate synthase large chain, found in Streptococcus pneumoniae (strain Hungary19A-6).